The chain runs to 162 residues: Small ribosomal subunit protein uS7m (162 aa).

This sequence belongs to the universal ribosomal protein uS7 family. As to quaternary structure, part of the small ribosomal subunit.

Its subcellular location is the mitochondrion. Functionally, one of the primary rRNA binding proteins, it binds directly to 16S-like rRNA where it nucleates assembly of the head domain of the small subunit. In Dictyostelium citrinum (Slime mold), this protein is Small ribosomal subunit protein uS7m (mrps7).